The following is a 115-amino-acid chain: Large ribosomal subunit protein bL19 (115 aa).

The protein belongs to the bacterial ribosomal protein bL19 family.

In terms of biological role, this protein is located at the 30S-50S ribosomal subunit interface and may play a role in the structure and function of the aminoacyl-tRNA binding site. This Bacillus pumilus (strain SAFR-032) protein is Large ribosomal subunit protein bL19.